Reading from the N-terminus, the 334-residue chain is Probable 3-hydroxyisobutyrate dehydrogenase-like 1, mitochondrial (334 aa).

A mitochondrion-targeting transit peptide spans 1–23; the sequence is MPLLLRRFPSPSVVSSFFLRRSM. Ala24 bears the N-acetylalanine mark. NAD(+) is bound by residues 38–67 and Thr133; that span reads TKIG…TVFN. Lys207 is a catalytic residue. NAD(+) is bound at residue Lys275.

Belongs to the HIBADH-related family. 3-hydroxyisobutyrate dehydrogenase subfamily.

The protein localises to the mitochondrion. The catalysed reaction is 3-hydroxy-2-methylpropanoate + NAD(+) = 2-methyl-3-oxopropanoate + NADH + H(+). It participates in amino-acid degradation; L-valine degradation. This is Probable 3-hydroxyisobutyrate dehydrogenase-like 1, mitochondrial from Arabidopsis thaliana (Mouse-ear cress).